A 1843-amino-acid chain; its full sequence is Xin actin-binding repeat-containing protein 1 (1843 aa).

Polar residues predominate over residues 1–10 (MADTQTQVAP). The tract at residues 1–48 (MADTQTQVAPTPTMRMATAEDLPLPPPPALEDLPLPPPKESFSKFHQQ) is disordered. The tract at residues 1–54 (MADTQTQVAPTPTMRMATAEDLPLPPPPALEDLPLPPPKESFSKFHQQRQASEL) is interaction with VASP. Residues 23 to 39 (PLPPPPALEDLPLPPPK) are compositionally biased toward pro residues. Xin repeat units follow at residues 89-104 (GDVQCMRWIFENWRLD), 121-136 (GDVQATSRKFEEGSFA), 151-166 (GDVRAARWLFETKPLD), and 186-201 (GDVQGTRMLFETRPLD). The tract at residues 132-151 (EGSFANSTDQEPTRPQPGGG) is disordered. Residues Ser-205, Ser-208, and Ser-213 each carry the phosphoserine modification. Xin repeat units lie at residues 226–241 (GDVKKTVKLFQTEPLC) and 264–279 (NAVRSARWLFETRPLD). A Phosphoserine modification is found at Ser-295. The Xin 7 repeat unit spans residues 302–317 (PDVSATRWIFETQPLD). Residue Ser-332 is modified to Phosphoserine. Xin repeat units lie at residues 340 to 355 (PDVQQQQHLFETRALD) and 376 to 391 (GDVRSTLWLFETKPLD). The segment at 406 to 432 (DPQDGEGHLSSDSSSALPFSQSAPQRD) is disordered. Residues 415-429 (SSDSSSALPFSQSAP) show a composition bias toward low complexity. Residues 436–451 (GDVKTFKNLFETLPLD) form a Xin 10 repeat. The tract at residues 455 to 479 (QGEVLAHGSPSREEGTDSAGQAQGI) is disordered. Xin repeat units lie at residues 507 to 522 (GDVQGYRWMFETQPLD) and 545 to 560 (GDVGTARWLFETQPLE). The tract at residues 531–632 (IDVVRGITRQ…AQSCTWMFKP (102 aa)) is interaction with CTNNB1. The span at 564-577 (QREQQERQKEEGKS) shows a compositional bias: basic and acidic residues. The segment at 564 to 591 (QREQQERQKEEGKSQGDPQPEAPPKGDV) is disordered. 5 Xin repeats span residues 589 to 604 (GDVQTIRWLFETCPMS), 621 to 636 (AEAQSCTWMFKPQPVD), 654 to 669 (GERQTDRHVFETEPLQ), 691 to 706 (GQVSRQKEVFQALEAG), and 723 to 738 (GSVHKFTWLFENCPMG). Disordered stretches follow at residues 943 to 999 (SLRW…QAIG), 1063 to 1205 (AEAQ…MAWG), 1238 to 1277 (SGPQAAGASPHPHNAFVPPPPTLPAAVTGPDFPAGAHRAE), 1289 to 1471 (DPLL…QKEL), and 1561 to 1696 (MSSL…DVSV). 2 stretches are compositionally biased toward polar residues: residues 1064 to 1073 (EAQSLHQQVL) and 1080 to 1089 (PTPTATSNPI). Residues 1294–1311 (SHSSPAGQRTPGGSQTKT) are compositionally biased toward polar residues. The span at 1357–1368 (GQREHQRGERDT) shows a compositional bias: basic and acidic residues. Positions 1393–1424 (GHSQPSLQHGLSTTAPRPTKNQATGSNAQSSE) are enriched in polar residues. The stretch at 1462-1490 (DSLQRNQKELQGLLNQVQALEKEAASSVD) forms a coiled coil. 2 stretches are compositionally biased toward polar residues: residues 1588–1600 (VTVSSSARPSGSG) and 1663–1679 (SRDSPSSPTFISIQSAT). An interaction with FLNC region spans residues 1685–1843 (TPSFKGNPDV…SCSYSQPAAQ (159 aa)).

The protein belongs to the Xin family. In terms of assembly, interacts (via N-terminus) with CTTN; the interaction promotes CTTN localization to intercalated disks in cardiomyocytes. Interacts with CTNNB1. Interacts with FLNC and VASP. Interacts with F-actin. In terms of tissue distribution, expressed in skeletal muscle at areas of Z-disk disruption in a longitudinal pattern spanning one or more sarcomeres (at protein level). As to expression, expressed in the heart (at protein level). Expressed in the heart.

The protein resides in the cell junction. It localises to the adherens junction. Its subcellular location is the desmosome. Protects actin filaments from depolymerization. Required for correct cardiac intercalated disk ultrastructure via maintenance of cell-cell adhesion stability, and as a result maintains cardiac organ morphology, conductance and heart beat rhythm. Required for development of normal skeletal muscle morphology and muscle fiber type composition. Plays a role in regulating muscle satellite cell activation and survival, as a result promotes muscle fiber recovery from injury and fatigue. This chain is Xin actin-binding repeat-containing protein 1, found in Homo sapiens (Human).